The primary structure comprises 548 residues: Chaperonin GroEL (548 aa).

Residues 30–33, Lys-51, 87–91, Gly-415, and Asp-495 contribute to the ATP site; these read TLGP and DGTTT.

Belongs to the chaperonin (HSP60) family. Forms a cylinder of 14 subunits composed of two heptameric rings stacked back-to-back. Interacts with the co-chaperonin GroES.

The protein localises to the cytoplasm. It carries out the reaction ATP + H2O + a folded polypeptide = ADP + phosphate + an unfolded polypeptide.. Its function is as follows. Together with its co-chaperonin GroES, plays an essential role in assisting protein folding. The GroEL-GroES system forms a nano-cage that allows encapsulation of the non-native substrate proteins and provides a physical environment optimized to promote and accelerate protein folding. This chain is Chaperonin GroEL, found in Pseudoalteromonas atlantica (strain T6c / ATCC BAA-1087).